Consider the following 310-residue polypeptide: E3 ubiquitin-protein ligase CSU1 (310 aa).

The RING-type 1; degenerate zinc-finger motif lies at 43–67; that stretch reads CSLCLKPFIDPMCCHKGHVFCRECI. Positions 75–95 form a coiled coil; sequence KKDIQRRLAAHSSQKKQDKDE. Residues 110-138 form a disordered region; sequence EFDQQNHSAMPRNSDKNHNEDKNGFHGAN. Basic and acidic residues predominate over residues 122-133; that stretch reads NSDKNHNEDKNG. The segment at 221-263 adopts an RING-type 2 zinc-finger fold; it reads CPSCKVTLTNTMSLVALSSCGHVFCKKCAEKFMPVDKVCLVCD.

It belongs to the NOSIP family.

The protein resides in the nucleus. Its subcellular location is the nucleus speckle. The catalysed reaction is S-ubiquitinyl-[E2 ubiquitin-conjugating enzyme]-L-cysteine + [acceptor protein]-L-lysine = [E2 ubiquitin-conjugating enzyme]-L-cysteine + N(6)-ubiquitinyl-[acceptor protein]-L-lysine.. Its pathway is protein modification; protein ubiquitination. In terms of biological role, RING-finger E3 ubiquitin-protein ligase that plays an major role in maintaining COP1 homeostasis in darkness. Negatively regulates COP1 protein accumulation by targeting COP1 for ubiquitination and subsequent proteasomal degradation in dark-grown seedlings. Negatively regulates the accumulation of SPA1 protein in the dark. The chain is E3 ubiquitin-protein ligase CSU1 from Arabidopsis thaliana (Mouse-ear cress).